A 150-amino-acid polypeptide reads, in one-letter code: UPF0506 protein SJCHGC02380 (150 aa).

A signal peptide spans 1–18; the sequence is MNTCIQLLILCLVTVINS. Asparagine 20, asparagine 24, asparagine 36, asparagine 48, asparagine 52, and asparagine 110 each carry an N-linked (GlcNAc...) asparagine glycan. Intrachain disulfides connect cysteine 116–cysteine 130, cysteine 123–cysteine 134, and cysteine 129–cysteine 139.

It belongs to the UPF0506 family.

The protein localises to the secreted. In Schistosoma japonicum (Blood fluke), this protein is UPF0506 protein SJCHGC02380.